The primary structure comprises 704 residues: Elongation factor G (704 aa).

The tr-type G domain maps to 8 to 290 (EKYRNIGICA…GVVRYLPAPN (283 aa)). Residues 17–24 (AHVDAGKT), 88–92 (DTPGH), and 142–145 (NKMD) contribute to the GTP site.

This sequence belongs to the TRAFAC class translation factor GTPase superfamily. Classic translation factor GTPase family. EF-G/EF-2 subfamily.

The protein localises to the cytoplasm. Its function is as follows. Catalyzes the GTP-dependent ribosomal translocation step during translation elongation. During this step, the ribosome changes from the pre-translocational (PRE) to the post-translocational (POST) state as the newly formed A-site-bound peptidyl-tRNA and P-site-bound deacylated tRNA move to the P and E sites, respectively. Catalyzes the coordinated movement of the two tRNA molecules, the mRNA and conformational changes in the ribosome. The chain is Elongation factor G from Francisella tularensis subsp. holarctica (strain FTNF002-00 / FTA).